A 503-amino-acid polypeptide reads, in one-letter code: GTPase Obg (503 aa).

In terms of domain architecture, Obg spans 2 to 159 (PQFVDRVVLH…KDVILELKSM (158 aa)). The region spanning 160 to 340 (ADVGLVGFPS…LKYALMDIVK (181 aa)) is the OBG-type G domain. GTP contacts are provided by residues 166-173 (GFPSAGKS), 191-195 (FTTLV), 212-215 (DVPG), 292-295 (NKMD), and 321-323 (STV). Mg(2+) is bound by residues serine 173 and threonine 193. Residues 371-444 (EFEVEADPSA…IGEITFEWDP (74 aa)) enclose the OCT domain. Positions 457 to 476 (RGTDVRLEQNTRATPEERKR) are enriched in basic and acidic residues. The disordered stretch occupies residues 457–503 (RGTDVRLEQNTRATPEERKRASQARRGLIDENDFGDGEVAERERWQG).

Belongs to the TRAFAC class OBG-HflX-like GTPase superfamily. OBG GTPase family. As to quaternary structure, monomer. The cofactor is Mg(2+).

It is found in the cytoplasm. An essential GTPase which binds GTP, GDP and possibly (p)ppGpp with moderate affinity, with high nucleotide exchange rates and a fairly low GTP hydrolysis rate. Plays a role in control of the cell cycle, stress response, ribosome biogenesis and in those bacteria that undergo differentiation, in morphogenesis control. This is GTPase Obg from Corynebacterium jeikeium (strain K411).